We begin with the raw amino-acid sequence, 734 residues long: Transcription factor EMB1444 (734 aa).

Positions 537–566 are disordered; the sequence is QFPTSLEIPKKNKKRAKPGESSRPRPRDRQ. Residues 548-555 carry the Nuclear localization signal motif; it reads NKKRAKPG. The 50-residue stretch at 552-601 folds into the bHLH domain; sequence AKPGESSRPRPRDRQLIQDRIKELRELVPNGSKCSIDSLLECTIKHMLFL. Residues 553–566 are compositionally biased toward basic and acidic residues; that stretch reads KPGESSRPRPRDRQ.

The protein belongs to the bHLH protein family. LHW subfamily. In terms of assembly, homodimer.

Its subcellular location is the nucleus. Its function is as follows. Transcription factor that may regulate root development. The polypeptide is Transcription factor EMB1444 (Arabidopsis thaliana (Mouse-ear cress)).